Consider the following 60-residue polypeptide: Large ribosomal subunit protein bL32 (60 aa).

The protein belongs to the bacterial ribosomal protein bL32 family.

The chain is Large ribosomal subunit protein bL32 from Moorella thermoacetica (strain ATCC 39073 / JCM 9320).